Here is a 551-residue protein sequence, read N- to C-terminus: Scaffold protein D13 ortholog (551 aa).

Belongs to the poxviridae protein D13 family. As to quaternary structure, homotrimer. Self-assembles to form a layer. Interacts with A17 (via N-terminus); this interaction is necessary for D13 association with membranes.

The protein localises to the membrane. In terms of biological role, scaffold protein which forms a transitory spherical honeycomb lattice providing curvature and rigidity to the convex membrane of crescent and immature virions (IV). This association occurs concomitantly with viral membrane formation. Targeted by the drug rifampicin, which prevents the formation of this lattice, and hence virus morphogenesis. In the presence of rifampicin, irregularly shaped membranes that lack the honeycomb layer accumulate around areas of electron-dense viroplasm. This layer is lost from virions during maturation from IV to mature virion (MV), through the proteolysis of A17 N-terminus. This is Scaffold protein D13 ortholog from Sus scrofa (Pig).